The following is a 485-amino-acid chain: Keratin, type I cytoskeletal 14 (485 aa).

Residues 1 to 15 (MATCSRQFTSSSSMK) are compositionally biased toward polar residues. The segment at 1–21 (MATCSRQFTSSSSMKGSCGIG) is disordered. The interval 1 to 121 (MATCSRQFTS…GLGDGLLVGS (121 aa)) is head. A coil 1A region spans residues 122 to 157 (EKVTMQNLNDRLATYLDKVRALEEANSDLEVKIRDW). Positions 122-433 (EKVTMQNLND…RLLEGEDAHL (312 aa)) constitute an IF rod domain. A linker 1 region spans residues 158 to 175 (YQRQRPTEIKDYSPYFKT). Positions 176 to 267 (IEDLKSKILA…KNHEEEMASM (92 aa)) are coil 1B. The segment at 268–290 (RGQVGGDVNVEMDAAPGVDLSRI) is linker 12. The segment at 291 to 429 (LNEMRDQYEK…ATYRRLLEGE (139 aa)) is coil 2. The tail stretch occupies residues 430 to 485 (DAHLSSAQFSSSSQFSSGSQSSRDVTSTNRQIRTKVMDVHDGKVVSTHEQVLRTKN). The interaction with Type I keratins and keratin filaments stretch occupies residues 432 to 485 (HLSSAQFSSSSQFSSGSQSSRDVTSTNRQIRTKVMDVHDGKVVSTHEQVLRTKN). Positions 437-451 (QFSSSSQFSSGSQSS) are enriched in low complexity. The tract at residues 437 to 458 (QFSSSSQFSSGSQSSRDVTSTN) is disordered. Position 448 is a phosphoserine (Ser448).

The protein belongs to the intermediate filament family. In terms of assembly, heterotetramer of two type I and two type II keratins. Forms a disulfide-linked heterodimer (via 2B domains) with KRT5 (via 2B domains). Forms a heterodimer with KRT1; the interaction is more abundant in the absence of KRT5. Interacts with TRADD and with keratin filaments. Associates with other type I keratins. Interacts with EPPK1. Interacts with KLHL24. Interacts with PKP1 (via N-terminus) and PKP2. Post-translationally, a disulfide bond is formed between rather than within filaments and promotes the formation of a keratin filament cage around the nucleus. Ubiquitinated by the BCR(KLHL24) E3 ubiquitin ligase complex. In terms of tissue distribution, expressed in most cells of squamous cell carcinomas, in spinous and suprabasal cells around the branching papillary region of papillomas, and weakly in a few proliferative cells of hyperplastic tissue.

It is found in the cytoplasm. The protein localises to the nucleus. The nonhelical tail domain is involved in promoting KRT5-KRT14 filaments to self-organize into large bundles and enhances the mechanical properties involved in resilience of keratin intermediate filaments in vitro. This chain is Keratin, type I cytoskeletal 14 (Krt14), found in Rattus norvegicus (Rat).